Here is a 140-residue protein sequence, read N- to C-terminus: uncharacterized protein (140 aa).

This is an uncharacterized protein from Acanthamoeba polyphaga mimivirus (APMV).